The sequence spans 412 residues: 1-deoxy-D-xylulose 5-phosphate reductoisomerase (412 aa).

Thr10, Gly11, Ser12, Ile13, Gly36, Lys37, Asn38, and Asn130 together coordinate NADPH. Lys131 lines the 1-deoxy-D-xylulose 5-phosphate pocket. Residue Glu132 coordinates NADPH. Mn(2+) is bound at residue Asp156. 4 residues coordinate 1-deoxy-D-xylulose 5-phosphate: Ser157, Glu158, Ser194, and His217. Mn(2+) is bound at residue Glu158. Gly223 is an NADPH binding site. Ser230, Asn235, Lys236, and Glu239 together coordinate 1-deoxy-D-xylulose 5-phosphate. Glu239 contacts Mn(2+).

This sequence belongs to the DXR family. Mg(2+) is required as a cofactor. Mn(2+) serves as cofactor.

It carries out the reaction 2-C-methyl-D-erythritol 4-phosphate + NADP(+) = 1-deoxy-D-xylulose 5-phosphate + NADPH + H(+). It participates in isoprenoid biosynthesis; isopentenyl diphosphate biosynthesis via DXP pathway; isopentenyl diphosphate from 1-deoxy-D-xylulose 5-phosphate: step 1/6. Its function is as follows. Catalyzes the NADPH-dependent rearrangement and reduction of 1-deoxy-D-xylulose-5-phosphate (DXP) to 2-C-methyl-D-erythritol 4-phosphate (MEP). The sequence is that of 1-deoxy-D-xylulose 5-phosphate reductoisomerase from Prochlorococcus marinus (strain NATL1A).